The sequence spans 504 residues: 2,3-bisphosphoglycerate-independent phosphoglycerate mutase (504 aa).

Positions 9 and 59 each coordinate Mn(2+). Ser-59 functions as the Phosphoserine intermediate in the catalytic mechanism. Substrate contacts are provided by residues His-120, 149-150 (RD), Arg-181, Arg-187, 253-256 (RPDR), and Lys-326. Mn(2+) contacts are provided by Asp-393, His-397, Asp-434, His-435, and His-451.

This sequence belongs to the BPG-independent phosphoglycerate mutase family. The cofactor is Mn(2+).

The enzyme catalyses (2R)-2-phosphoglycerate = (2R)-3-phosphoglycerate. It functions in the pathway carbohydrate degradation; glycolysis; pyruvate from D-glyceraldehyde 3-phosphate: step 3/5. Catalyzes the interconversion of 2-phosphoglycerate and 3-phosphoglycerate. This Haloquadratum walsbyi (strain DSM 16790 / HBSQ001) protein is 2,3-bisphosphoglycerate-independent phosphoglycerate mutase.